Here is a 290-residue protein sequence, read N- to C-terminus: Protease HtpX (290 aa).

Transmembrane regions (helical) follow at residues 6-26 and 36-56; these read LFLVTNLAVMLVLGVVLNILF and ISGLLVFCAVFGFGGSFISLL. His143 contacts Zn(2+). Glu144 is a catalytic residue. His147 is a Zn(2+) binding site. Transmembrane regions (helical) follow at residues 158–178 and 200–220; these read LIQGVVNTFVMFFARIVAGVI and ITVFVLEMLFGVLASIIVMWF. Glu225 is a Zn(2+) binding site.

This sequence belongs to the peptidase M48B family. Zn(2+) serves as cofactor.

It is found in the cell inner membrane. The sequence is that of Protease HtpX from Aeromonas hydrophila subsp. hydrophila (strain ATCC 7966 / DSM 30187 / BCRC 13018 / CCUG 14551 / JCM 1027 / KCTC 2358 / NCIMB 9240 / NCTC 8049).